The primary structure comprises 258 residues: Hydroxyacylglutathione hydrolase (258 aa).

Zn(2+) is bound by residues His55, His57, Asp59, His60, His115, Asp132, and His170.

This sequence belongs to the metallo-beta-lactamase superfamily. Glyoxalase II family. As to quaternary structure, monomer. It depends on Zn(2+) as a cofactor.

It carries out the reaction an S-(2-hydroxyacyl)glutathione + H2O = a 2-hydroxy carboxylate + glutathione + H(+). Its pathway is secondary metabolite metabolism; methylglyoxal degradation; (R)-lactate from methylglyoxal: step 2/2. Functionally, thiolesterase that catalyzes the hydrolysis of S-D-lactoyl-glutathione to form glutathione and D-lactic acid. In Shewanella halifaxensis (strain HAW-EB4), this protein is Hydroxyacylglutathione hydrolase.